We begin with the raw amino-acid sequence, 138 residues long: Large ribosomal subunit protein uL16 (138 aa).

The segment covering 1-13 (MLQPARRKYRKEQ) has biased composition (basic residues). The interval 1–22 (MLQPARRKYRKEQKGRNTGVAT) is disordered.

Belongs to the universal ribosomal protein uL16 family. In terms of assembly, part of the 50S ribosomal subunit.

Functionally, binds 23S rRNA and is also seen to make contacts with the A and possibly P site tRNAs. This Polaromonas sp. (strain JS666 / ATCC BAA-500) protein is Large ribosomal subunit protein uL16.